Consider the following 116-residue polypeptide: NADH-ubiquinone oxidoreductase chain 3 (116 aa).

Helical transmembrane passes span 3 to 23 (LITTIITITITLSAVLATISF), 56 to 76 (FFLIAILFLLFDLEIALLLPL), and 85 to 105 (PALTLVWSTAVLALLTLGLIY).

It belongs to the complex I subunit 3 family.

It localises to the mitochondrion membrane. The enzyme catalyses a ubiquinone + NADH + 5 H(+)(in) = a ubiquinol + NAD(+) + 4 H(+)(out). Its function is as follows. Core subunit of the mitochondrial membrane respiratory chain NADH dehydrogenase (Complex I) that is believed to belong to the minimal assembly required for catalysis. Complex I functions in the transfer of electrons from NADH to the respiratory chain. The immediate electron acceptor for the enzyme is believed to be ubiquinone. The chain is NADH-ubiquinone oxidoreductase chain 3 (MT-ND3) from Oncorhynchus masou (Cherry salmon).